The following is a 339-amino-acid chain: Lipoate-protein ligase A (339 aa).

Residues 29 to 217 (PKKQSILFLW…AFFQHYGMKV (189 aa)) enclose the BPL/LPL catalytic domain. Residues Arg-71, 76–79 (GAVF), and Lys-135 each bind ATP. Lys-135 contributes to the (R)-lipoate binding site.

The protein belongs to the LplA family. In terms of assembly, monomer.

The protein resides in the cytoplasm. The catalysed reaction is L-lysyl-[lipoyl-carrier protein] + (R)-lipoate + ATP = N(6)-[(R)-lipoyl]-L-lysyl-[lipoyl-carrier protein] + AMP + diphosphate + H(+). Its pathway is protein modification; protein lipoylation via exogenous pathway; protein N(6)-(lipoyl)lysine from lipoate: step 1/2. It functions in the pathway protein modification; protein lipoylation via exogenous pathway; protein N(6)-(lipoyl)lysine from lipoate: step 2/2. Functionally, catalyzes both the ATP-dependent activation of exogenously supplied lipoate to lipoyl-AMP and the transfer of the activated lipoyl onto the lipoyl domains of lipoate-dependent enzymes. This is Lipoate-protein ligase A from Blochmanniella pennsylvanica (strain BPEN).